A 92-amino-acid chain; its full sequence is Large ribosomal subunit protein eL43z (92 aa).

The segment at 39–60 adopts a C4-type zinc-finger fold; sequence CEFCGKYSVKRKVVGIWGCKDC.

It belongs to the eukaryotic ribosomal protein eL43 family.

This Arabidopsis thaliana (Mouse-ear cress) protein is Large ribosomal subunit protein eL43z (RPL37AB).